The following is a 446-amino-acid chain: Packaging protein 1 (446 aa).

The span at 1–10 (METRGRRRAF) shows a compositional bias: basic residues. A disordered region spans residues 1 to 74 (METRGRRRAF…PSQPPQPRSL (74 aa)). 170–177 (GPTGCGKS) is an ATP binding site. The segment at 439 to 446 (RAYRKRNK) is DNA-binding.

This sequence belongs to the adenoviridae packaging protein 1 family. In terms of assembly, homodimer. Part of a genome packaging complex composed of packaging proteins 1, 2 and 3; this complex specifically binds to the packaging sequence on the left end of viral genomic DNA and performs packaging of the viral genome. Interacts with protein 33K.

It localises to the virion. It is found in the host nucleus. Its subcellular location is the host nucleoplasm. The protein resides in the host nucleolus. Its function is as follows. Component of the packaging machinery which encapsidates the viral DNA into preformed capsids and transcriptional activator of the viral major late promoter (MLP). Binds, along with packaging proteins 2 and 3, to the specific packaging sequence on the left end of viral genomic DNA and displays ATPase activity thereby providing the power stroke of the packaging machinery. The activity of packaging protein IVa2 is stimulated by protein 33K which acts as a terminase. May be the protein that pumps DNA into the capsid powered by ATP hydrolysis. Specifically binds to the 5'-CG-3' nucleotides of the repeats making up the packaging sequence. Component of the DEF-A and DEF-B transcription factors that bind downstream elements of the major late promoter (MLP), and stimulate transcription from the MLP after initiation of viral DNA replication. DEF-A is a heterodimer packaging proteins 1 and 2 and DEF-B is a homodimer of packaging protein 1. This Human adenovirus F serotype 40 (HAdV-40) protein is Packaging protein 1.